A 338-amino-acid polypeptide reads, in one-letter code: Tetraacyldisaccharide 4'-kinase (338 aa).

63–70 (TVGGSGKT) lines the ATP pocket.

It belongs to the LpxK family.

It catalyses the reaction a lipid A disaccharide + ATP = a lipid IVA + ADP + H(+). It functions in the pathway glycolipid biosynthesis; lipid IV(A) biosynthesis; lipid IV(A) from (3R)-3-hydroxytetradecanoyl-[acyl-carrier-protein] and UDP-N-acetyl-alpha-D-glucosamine: step 6/6. In terms of biological role, transfers the gamma-phosphate of ATP to the 4'-position of a tetraacyldisaccharide 1-phosphate intermediate (termed DS-1-P) to form tetraacyldisaccharide 1,4'-bis-phosphate (lipid IVA). This chain is Tetraacyldisaccharide 4'-kinase, found in Shewanella loihica (strain ATCC BAA-1088 / PV-4).